The chain runs to 957 residues: MARYNPFSFTPGPVVFFTTVIYVGLFAALLVTHLTVPDYPSDPPAGINLTEAWADLEHITRRFHPYNSHANDHVREYLLSRIQGIVATKHLDGSQVEIIDDLTSNATFSSGATSVYFEGTNIIVAIRGSEDDEPFNSTDRRPNNGGVLVNAHYDSVSSGYGATDDGVGVVTVLQLLSYFTESHNWPKRTIILLLNNGEEDFLNGAKAFMRNPISRVPHTFVNLEGAGAGGRATLFRSTDTEVTRFYSKSKYPFGTVVSGDGFKKGLIRSETDYRVFHSDLGLRGLDIAFMEPRARYHTVEDSTRETSMNSLWHMLSAALASTSGLAAVTGEEFSGSESLDNGRVNAGRGSDGVWFDLFGRVFVVFQLHTLFALCVTLLVVAPITLIGLTFGLSKADKNYLLARKAFVYSSDDDNPVQLYGWRGFFRFPIIFISATAVVVALAYLLVRFNAFIIYSSPFAVWSMMLSAWFFVAWFFSRGADAMRPSALQRMYALIWLFIGSFVLLTIVTVFVNNYQVVAGYPALFYFAVVFVAIMLSYLELFFAPTKSAYARHFEHDANSRRNSDSASRPLTGSTTAARSDDRPVADDDATEITSLLRGDRRGFTRYGSRRDSASEGGEDQAQGSQRLDLGNVYPGEQEWSGKLPSWIWIIQLLLLAPLVIVLVGQVALLLTSALYQTPSDGNSPLFIYLAIAALSVLLLAPTGPFIHRFTYHVPTFLFLVCLGTVIYNLVAFPFSRDHRLKVYFVQRVNCETGANTVSLTGLDSYVQRIVGELPSAQDQPLNCTTPDVATRKELKTCEWEGLPAKVVPNAAGAAPFGNETNTGRWLEYSIHKGNRSNKATMLVVGLNTRACRIVFDSPISGLAVTGAVSDPRFKPVGAAGSREVRLWHREFGQPWNVGLTWDAEEHAKLSGRVVCLWSDANTGSIPAFDEVQHYLPVWAIPSKISDGLVEGFKRFEI.

The Cytoplasmic segment spans residues 1-10 (MARYNPFSFT). Residues 11-31 (PGPVVFFTTVIYVGLFAALLV) form a helical membrane-spanning segment. At 32–369 (THLTVPDYPS…RVFVVFQLHT (338 aa)) the chain is on the vacuolar side. Residues asparagine 48, asparagine 105, and asparagine 136 are each glycosylated (N-linked (GlcNAc...) asparagine). Residues histidine 152 and aspartate 164 each contribute to the Zn(2+) site. Glutamate 198 (proton acceptor) is an active-site residue. Positions 199, 224, and 297 each coordinate Zn(2+). Residues 370 to 390 (LFALCVTLLVVAPITLIGLTF) form a helical membrane-spanning segment. Residues 391–423 (GLSKADKNYLLARKAFVYSSDDDNPVQLYGWRG) are Cytoplasmic-facing. The chain crosses the membrane as a helical span at residues 424–444 (FFRFPIIFISATAVVVALAYL). The Vacuolar portion of the chain corresponds to 445-450 (LVRFNA). The helical transmembrane segment at 451-471 (FIIYSSPFAVWSMMLSAWFFV) threads the bilayer. Residues 472–490 (AWFFSRGADAMRPSALQRM) lie on the Cytoplasmic side of the membrane. A helical transmembrane segment spans residues 491 to 511 (YALIWLFIGSFVLLTIVTVFV). Over 512–521 (NNYQVVAGYP) the chain is Vacuolar. A helical transmembrane segment spans residues 522-542 (ALFYFAVVFVAIMLSYLELFF). Topologically, residues 543-642 (APTKSAYARH…YPGEQEWSGK (100 aa)) are cytoplasmic. 2 disordered regions span residues 559–586 (SRRN…PVAD) and 603–627 (FTRY…SQRL). Residues 603–613 (FTRYGSRRDSA) show a composition bias toward basic and acidic residues. A helical membrane pass occupies residues 643–663 (LPSWIWIIQLLLLAPLVIVLV). Topologically, residues 664 to 685 (GQVALLLTSALYQTPSDGNSPL) are vacuolar. The helical transmembrane segment at 686 to 706 (FIYLAIAALSVLLLAPTGPFI) threads the bilayer. At 707-713 (HRFTYHV) the chain is on the cytoplasmic side. The helical transmembrane segment at 714-734 (PTFLFLVCLGTVIYNLVAFPF) threads the bilayer. The Vacuolar segment spans residues 735–957 (SRDHRLKVYF…LVEGFKRFEI (223 aa)). Asparagine 782, asparagine 818, and asparagine 834 each carry an N-linked (GlcNAc...) asparagine glycan.

The protein belongs to the peptidase M28 family. Zn(2+) serves as cofactor.

Its subcellular location is the vacuole membrane. Functionally, may be involved in vacuolar sorting and osmoregulation. The polypeptide is Vacuolar membrane protease (Pyrenophora teres f. teres (strain 0-1) (Barley net blotch fungus)).